The following is a 122-amino-acid chain: Large ribosomal subunit protein uL14 (122 aa).

The protein belongs to the universal ribosomal protein uL14 family. In terms of assembly, part of the 50S ribosomal subunit. Forms a cluster with proteins L3 and L19. In the 70S ribosome, L14 and L19 interact and together make contacts with the 16S rRNA in bridges B5 and B8.

Functionally, binds to 23S rRNA. Forms part of two intersubunit bridges in the 70S ribosome. The chain is Large ribosomal subunit protein uL14 from Thermoanaerobacter pseudethanolicus (strain ATCC 33223 / 39E) (Clostridium thermohydrosulfuricum).